Here is a 171-residue protein sequence, read N- to C-terminus: Transcriptional repressor NrdR (171 aa).

A zinc finger lies at 3–34 (CPFCGDPNTQVADTRENEGGEVVRRRRRCPKC). Positions 49–139 (PHIVKRNGNR…VYRNFADVDE (91 aa)) constitute an ATP-cone domain. The interval 148-171 (KARPKRNRPAEPPEPTSENDLFRS) is disordered.

This sequence belongs to the NrdR family. Requires Zn(2+) as cofactor.

Negatively regulates transcription of bacterial ribonucleotide reductase nrd genes and operons by binding to NrdR-boxes. The polypeptide is Transcriptional repressor NrdR (Aromatoleum aromaticum (strain DSM 19018 / LMG 30748 / EbN1) (Azoarcus sp. (strain EbN1))).